A 546-amino-acid polypeptide reads, in one-letter code: Probable protein kinase UbiB (546 aa).

Residues 123–501 (DFDETPLASA…SRRQGQARYL (379 aa)) enclose the Protein kinase domain. ATP-binding positions include 129–137 (LASASIAQV) and Lys152. The active-site Proton acceptor is Asp287. A run of 2 helical transmembrane segments spans residues 498–517 (ARYL…FLLT) and 522–541 (IEWG…LGWL).

Belongs to the ABC1 family. UbiB subfamily.

The protein resides in the cell inner membrane. The protein operates within cofactor biosynthesis; ubiquinone biosynthesis [regulation]. Is probably a protein kinase regulator of UbiI activity which is involved in aerobic coenzyme Q (ubiquinone) biosynthesis. This chain is Probable protein kinase UbiB, found in Aeromonas hydrophila subsp. hydrophila (strain ATCC 7966 / DSM 30187 / BCRC 13018 / CCUG 14551 / JCM 1027 / KCTC 2358 / NCIMB 9240 / NCTC 8049).